Here is a 349-residue protein sequence, read N- to C-terminus: Cytoplasmic tRNA 2-thiolation protein 2 (349 aa).

This sequence belongs to the CTU2/NCS2 family.

It localises to the cytoplasm. The protein operates within tRNA modification; 5-methoxycarbonylmethyl-2-thiouridine-tRNA biosynthesis. In terms of biological role, plays a central role in 2-thiolation of mcm(5)S(2)U at tRNA wobble positions of tRNA(Lys), tRNA(Glu) and tRNA(Gln). May act by forming a heterodimer with tut-1/ctu-1 that ligates sulfur from thiocarboxylated urm-1 onto the uridine of tRNAs at wobble position. This Caenorhabditis elegans protein is Cytoplasmic tRNA 2-thiolation protein 2.